Here is a 210-residue protein sequence, read N- to C-terminus: Glutathione S-transferase 4 (210 aa).

A GST N-terminal domain is found at methionine 1–aspartate 80. Glutathione contacts are provided by residues serine 9, histidine 50–isoleucine 52, and glutamate 64–arginine 66. One can recognise a GST C-terminal domain in the interval cysteine 87–isoleucine 208.

It belongs to the GST superfamily. Theta family. In terms of assembly, homodimer.

The enzyme catalyses RX + glutathione = an S-substituted glutathione + a halide anion + H(+). Its function is as follows. Conjugation of reduced glutathione to a wide number of exogenous and endogenous hydrophobic electrophiles. This Musca domestica (House fly) protein is Glutathione S-transferase 4 (Gst4).